The chain runs to 342 residues: Epoxide hydrolase srdG (342 aa).

One can recognise an AB hydrolase-1 domain in the interval Ala44 to Lys332. The active-site Nucleophile is the Asp122. His320 serves as the catalytic Proton acceptor.

The protein belongs to the AB hydrolase superfamily. Epoxide hydrolase family.

In terms of biological role, highly reducing polyketide synthase; part of the gene cluster that mediates the biosynthesis of sordarial, a salicylic aldehyde structurally related to the phytotoxin pyriculol. The most interesting aspect of this pathway is formation of an aromatic product from the highly reducing polyketide synthase srdA. SrdA synthesizes a reduced polyketide chain from one molecule of acetyl-CoA and five molecules of malonyl-CoA. The polyketide chain is then reductively released as an aldehyde. The oxidoreductases srdC, srdD and srdE then oxidize one of the hydroxy groups to facilitate the intramolecular aldol condensation, followed by dehydration to yield a salicylic aldehyde. This aldehyde can undergo facile reduction by endogenous reductases to yield the alcohol 1-hydroxy-2-hydroxymethyl-3-pent-1,3-dienylbenzene. The flavin-dependent srdI counteract against the propensity of the aldehydes to be reduced under physiological conditions and is responsible for reoxidizing 1-hydroxy-2-hydroxymethyl-3-pent-1,3-dienylbenzene back to the salicylic aldehyde. This salicylic aldehyde is then selectively epoxidized by the cupin-domain-containing oxidoreductase srdB to yield the epoxide, which can be hydrolyzed stereoselectively by the hydrolase srdG to give the final product sordarial. This Neurospora crassa (strain ATCC 24698 / 74-OR23-1A / CBS 708.71 / DSM 1257 / FGSC 987) protein is Epoxide hydrolase srdG.